The chain runs to 102 residues: Omega-hexatoxin-Hi2a (102 aa).

Positions 1–23 (MKFSKLSLTLALILTQALLVVCG) are cleaved as a signal peptide. A propeptide spanning residues 24–56 (KINEDFMENGLESHALHDEIRKPIDTEKADAER) is cleaved from the precursor. 3 disulfide bridges follow: Cys61–Cys75, Cys68–Cys81, and Cys74–Cys86. Leucine amide is present on Leu98. The propeptide occupies 100-102 (RAL).

Belongs to the neurotoxin 15 family. 02 (omega-actx) subfamily. As to expression, expressed by the venom gland.

It is found in the secreted. Functionally, potent inhibitor of insect, but not mammalian, voltage-gated calcium channels (Cav). The chain is Omega-hexatoxin-Hi2a from Hadronyche infensa (Fraser island funnel-web spider).